We begin with the raw amino-acid sequence, 602 residues long: Glycoprotein G (602 aa).

The Intravirion portion of the chain corresponds to 1 to 49 (MPAENKKVRFENTTSDKGKIPSKVIKSYYGTMDIKKINEGLLDSKILSA). The helical transmembrane segment at 50–70 (FNTVIALLGSIVIIVMNIMII) threads the bilayer. Residues 71–602 (QNYTRSTDNQ…FAVKIPEQCT (532 aa)) are Virion surface-facing. N72 and N159 each carry an N-linked (GlcNAc...) asparagine; by host glycan. The stalk stretch occupies residues 96–163 (GLADKIGTEI…KIHECNISCP (68 aa)). Positions 177–602 (GVSNLVGLPN…FAVKIPEQCT (426 aa)) are head. Disulfide bonds link C189–C601, C216–C240, C282–C295, C382–C395, C387–C499, C493–C503, and C565–C574. N-linked (GlcNAc...) asparagine; by host glycans are attached at residues N306 and N378. 2 N-linked (GlcNAc...) asparagine; by host glycosylation sites follow: N417 and N481. N-linked (GlcNAc...) asparagine; by host glycosylation occurs at N529.

The protein belongs to the paramyxoviruses hemagglutinin-neuraminidase family. In terms of assembly, homotetramer; disulfide-linked. Interacts with host EFNB2; this interaction allows the virus entry into the host cell. Interacts with host EFNB3; this interaction allows the virus entry into the host cell. Interacts with the fusion glycoprotein; this interaction involves both head and stalk regions of glygoprotein G. In terms of processing, N-glycosylated.

It localises to the virion membrane. Its subcellular location is the host cell membrane. Interacts with host ephrinB2/EFNB2 or ephrin B3/EFNB3 to provide virion attachment to target cell. This attachment induces virion internalization predominantly through clathrin-mediated endocytosis. This chain is Glycoprotein G (G), found in Cynopterus brachyotis (Lesser short-nosed fruit bat).